A 384-amino-acid polypeptide reads, in one-letter code: Dual-specificity RNA methyltransferase RlmN (384 aa).

Catalysis depends on Glu-105, which acts as the Proton acceptor. A Radical SAM core domain is found at 111-350 (EDDRATLCVS…TIVRKTRGDD (240 aa)). An intrachain disulfide couples Cys-118 to Cys-355. The [4Fe-4S] cluster site is built by Cys-125, Cys-129, and Cys-132. S-adenosyl-L-methionine contacts are provided by residues 179–180 (GE), Ser-211, 233–235 (SLH), and Asn-312. Catalysis depends on Cys-355, which acts as the S-methylcysteine intermediate.

Belongs to the radical SAM superfamily. RlmN family. [4Fe-4S] cluster is required as a cofactor.

The protein resides in the cytoplasm. The catalysed reaction is adenosine(2503) in 23S rRNA + 2 reduced [2Fe-2S]-[ferredoxin] + 2 S-adenosyl-L-methionine = 2-methyladenosine(2503) in 23S rRNA + 5'-deoxyadenosine + L-methionine + 2 oxidized [2Fe-2S]-[ferredoxin] + S-adenosyl-L-homocysteine. It catalyses the reaction adenosine(37) in tRNA + 2 reduced [2Fe-2S]-[ferredoxin] + 2 S-adenosyl-L-methionine = 2-methyladenosine(37) in tRNA + 5'-deoxyadenosine + L-methionine + 2 oxidized [2Fe-2S]-[ferredoxin] + S-adenosyl-L-homocysteine. Its function is as follows. Specifically methylates position 2 of adenine 2503 in 23S rRNA and position 2 of adenine 37 in tRNAs. m2A2503 modification seems to play a crucial role in the proofreading step occurring at the peptidyl transferase center and thus would serve to optimize ribosomal fidelity. The sequence is that of Dual-specificity RNA methyltransferase RlmN from Escherichia coli O17:K52:H18 (strain UMN026 / ExPEC).